The primary structure comprises 285 residues: Small ribosomal subunit protein uS2 (285 aa).

A disordered region spans residues 228–285; the sequence is RAGLSADKDAKPEAGAGEPLAEWEQELLSQAAPAAEAEAAPAAEAEAAPAAEAPATEA. Residues 258 to 285 show a composition bias toward low complexity; that stretch reads AAPAAEAEAAPAAEAEAAPAAEAPATEA.

Belongs to the universal ribosomal protein uS2 family.

In Rhodococcus erythropolis (strain PR4 / NBRC 100887), this protein is Small ribosomal subunit protein uS2.